Reading from the N-terminus, the 108-residue chain is Nucleoid-associated protein CPS_3743 (108 aa).

Residues N87 to F108 are disordered.

Belongs to the YbaB/EbfC family. In terms of assembly, homodimer.

It is found in the cytoplasm. It localises to the nucleoid. Binds to DNA and alters its conformation. May be involved in regulation of gene expression, nucleoid organization and DNA protection. The polypeptide is Nucleoid-associated protein CPS_3743 (Colwellia psychrerythraea (strain 34H / ATCC BAA-681) (Vibrio psychroerythus)).